We begin with the raw amino-acid sequence, 55 residues long: Small ribosomal subunit protein bS21 (55 aa).

This sequence belongs to the bacterial ribosomal protein bS21 family.

The polypeptide is Small ribosomal subunit protein bS21 (Phytoplasma mali (strain AT)).